The chain runs to 201 residues: NAD(P)H quinone oxidoreductase PST2 (201 aa).

Residues 6–192 (VAIIIYSLYH…SIAQQQGEDF (187 aa)) form the Flavodoxin-like domain. FMN is bound by residues 12 to 16 (SLYHH) and 112 to 164 (VFVS…SPWG).

The protein belongs to the WrbA family. Requires FMN as cofactor.

The protein localises to the cell membrane. The enzyme catalyses a quinone + NADH + H(+) = a quinol + NAD(+). The catalysed reaction is a quinone + NADPH + H(+) = a quinol + NADP(+). In terms of biological role, flavodoxin-like protein (FLP) that plays a role in cell wall integrity, oxidative stress protection and virulence. FLPs act as NAD(P)H quinone oxidoreductases. Reduces ubiquinone (coenzyme Q), enabling it to serve as an antioxidant in the membrane. This Candida albicans (strain SC5314 / ATCC MYA-2876) (Yeast) protein is NAD(P)H quinone oxidoreductase PST2.